The following is a 308-amino-acid chain: tRNA dimethylallyltransferase (308 aa).

10 to 17 (GPTASGKT) serves as a coordination point for ATP. 12 to 17 (TASGKT) lines the substrate pocket. 2 interaction with substrate tRNA regions span residues 35–38 (DSSL) and 159–163 (QRIFR).

Belongs to the IPP transferase family. Monomer. It depends on Mg(2+) as a cofactor.

The enzyme catalyses adenosine(37) in tRNA + dimethylallyl diphosphate = N(6)-dimethylallyladenosine(37) in tRNA + diphosphate. In terms of biological role, catalyzes the transfer of a dimethylallyl group onto the adenine at position 37 in tRNAs that read codons beginning with uridine, leading to the formation of N6-(dimethylallyl)adenosine (i(6)A). The polypeptide is tRNA dimethylallyltransferase (Francisella tularensis subsp. tularensis (strain FSC 198)).